We begin with the raw amino-acid sequence, 560 residues long: Bifunctional NAD(P)H-hydrate repair enzyme (560 aa).

Residues 1-241 (MLSRLSERCS…WMTAPERMRA (241 aa)) are NAD(P)H-hydrate epimerase. The YjeF N-terminal domain maps to 29 to 235 (LRDAEPAAAA…SLGLEDWMTA (207 aa)). The interval 77-81 (NNGGD) is NADPHX 1; for epimerase activity. K(+) contacts are provided by N78 and D145. Positions 149–155 (GTGICGP) are NADPHX 1; for epimerase activity. (6S)-NADPHX contacts are provided by Y160 and D178. Residue S181 coordinates K(+). The region spanning 249–547 (LDDVYEYFGI…HRVPLIVNAS (299 aa)) is the YjeF C-terminal domain. The interval 249–560 (LDDVYEYFGI…PATRQRSSGP (312 aa)) is ADP-dependent (S)-NAD(P)H-hydrate dehydratase. A (6S)-NADPHX-binding site is contributed by G351. The segment at 417–423 (HPGEAAR) is NADPHX 2; for dehydratase activity. ADP contacts are provided by residues 454–458 (KGPGT) and 475–484 (NAGMASGGMG). D485 provides a ligand contact to (6S)-NADPHX.

The protein in the N-terminal section; belongs to the NnrE/AIBP family. It in the C-terminal section; belongs to the NnrD/CARKD family. The cofactor is K(+).

It catalyses the reaction (6S)-NADHX + ADP = AMP + phosphate + NADH + H(+). The catalysed reaction is (6S)-NADPHX + ADP = AMP + phosphate + NADPH + H(+). It carries out the reaction (6R)-NADHX = (6S)-NADHX. The enzyme catalyses (6R)-NADPHX = (6S)-NADPHX. Bifunctional enzyme that catalyzes the epimerization of the S- and R-forms of NAD(P)HX and the dehydration of the S-form of NAD(P)HX at the expense of ADP, which is converted to AMP. This allows the repair of both epimers of NAD(P)HX, a damaged form of NAD(P)H that is a result of enzymatic or heat-dependent hydration. The polypeptide is Bifunctional NAD(P)H-hydrate repair enzyme (Leishmania infantum).